Here is a 142-residue protein sequence, read N- to C-terminus: Virulence-associated membrane protein 1 (142 aa).

The signal sequence occupies residues 1 to 20; it reads MRGILVALTAALIFCSLTPA. The helical transmembrane segment at 59–79 threads the bilayer; that stretch reads IAIAVGTALVTLVSAGVGGML.

Monomer.

It is found in the membrane. In terms of biological role, during infection, may play a role in establishing and maintaining biotrophy; the formation of a tight interaction zone between the host and the pathogen. The polypeptide is Virulence-associated membrane protein 1 (Mycosarcoma maydis (Corn smut fungus)).